The chain runs to 851 residues: Alanine--tRNA ligase (851 aa).

Zn(2+) contacts are provided by H554, H558, C656, and H660.

Belongs to the class-II aminoacyl-tRNA synthetase family. It depends on Zn(2+) as a cofactor.

It localises to the cytoplasm. It catalyses the reaction tRNA(Ala) + L-alanine + ATP = L-alanyl-tRNA(Ala) + AMP + diphosphate. Functionally, catalyzes the attachment of alanine to tRNA(Ala) in a two-step reaction: alanine is first activated by ATP to form Ala-AMP and then transferred to the acceptor end of tRNA(Ala). Also edits incorrectly charged Ser-tRNA(Ala) and Gly-tRNA(Ala) via its editing domain. The protein is Alanine--tRNA ligase of Aliarcobacter butzleri (strain RM4018) (Arcobacter butzleri).